Reading from the N-terminus, the 313-residue chain is D-alanine--D-alanine ligase (313 aa).

The region spanning 108–308 (KLVWQQTGVP…YSELVVKVLS (201 aa)) is the ATP-grasp domain. Residue 138–193 (VAKLGLPLFVKPASEGSSVAVLKVKTADALPAALAEAATHDKIVIVEKSIEGGGEY) participates in ATP binding. The Mg(2+) site is built by aspartate 262, glutamate 275, and asparagine 277.

The protein belongs to the D-alanine--D-alanine ligase family. The cofactor is Mg(2+). Mn(2+) serves as cofactor.

It is found in the cytoplasm. The enzyme catalyses 2 D-alanine + ATP = D-alanyl-D-alanine + ADP + phosphate + H(+). It participates in cell wall biogenesis; peptidoglycan biosynthesis. Its function is as follows. Cell wall formation. This is D-alanine--D-alanine ligase from Burkholderia multivorans (strain ATCC 17616 / 249).